Reading from the N-terminus, the 304-residue chain is D-tagatose-1-phosphate kinase (304 aa).

Asp-250 serves as the catalytic Proton acceptor.

The protein belongs to the carbohydrate kinase PfkB family. Mg(2+) is required as a cofactor.

The catalysed reaction is alpha-D-tagatopyranose 1-phosphate + ATP = D-tagatofuranose 1,6-bisphosphate + ADP + H(+). It functions in the pathway carbohydrate degradation. With respect to regulation, activity is inhibited by tagatose-6-phosphate and fructose-6-phosphate. Functionally, kinase involved in a D-tagatose catabolic pathway. Catalyzes the phosphorylation of D-tagatose-1-phosphate (Tag-1P) to D-tagatose-1,6-bisphosphate. Can also use D-fructose-1-phosphate, with 40-fold lower catalytic efficiency, but not tagatose-6-phosphate or fructose-6-phosphate. The substrate, which occurs in a pyranose form in solution, may undergo a change to the furanose conformation after binding to the enzyme, in order to permit phosphorylation at C-6. In Bacillus licheniformis (strain ATCC 14580 / DSM 13 / JCM 2505 / CCUG 7422 / NBRC 12200 / NCIMB 9375 / NCTC 10341 / NRRL NRS-1264 / Gibson 46), this protein is D-tagatose-1-phosphate kinase.